A 171-amino-acid chain; its full sequence is Adenine phosphoribosyltransferase (171 aa).

It belongs to the purine/pyrimidine phosphoribosyltransferase family. In terms of assembly, homodimer.

The protein resides in the cytoplasm. It carries out the reaction AMP + diphosphate = 5-phospho-alpha-D-ribose 1-diphosphate + adenine. It participates in purine metabolism; AMP biosynthesis via salvage pathway; AMP from adenine: step 1/1. Its function is as follows. Catalyzes a salvage reaction resulting in the formation of AMP, that is energically less costly than de novo synthesis. The sequence is that of Adenine phosphoribosyltransferase from Mycoplasmopsis fermentans (strain ATCC 19989 / NBRC 14854 / NCTC 10117 / PG18) (Mycoplasma fermentans).